The following is a 483-amino-acid chain: 6-phosphogluconate dehydrogenase, decarboxylating 1 (483 aa).

NADP(+) contacts are provided by residues 11–16, 34–36, 78–80, and Asn-106; these read GLAVMG, NRT, and VKA. Substrate is bound by residues Asn-106 and 132–134; that span reads SGG. Lys-186 functions as the Proton acceptor in the catalytic mechanism. Residue 189 to 190 participates in substrate binding; it reads HN. Catalysis depends on Glu-193, which acts as the Proton donor. Tyr-194, Lys-264, Arg-291, Arg-454, and His-460 together coordinate substrate.

It belongs to the 6-phosphogluconate dehydrogenase family. In terms of assembly, homodimer.

The protein resides in the cytoplasm. The enzyme catalyses 6-phospho-D-gluconate + NADP(+) = D-ribulose 5-phosphate + CO2 + NADPH. Its pathway is carbohydrate degradation; pentose phosphate pathway; D-ribulose 5-phosphate from D-glucose 6-phosphate (oxidative stage): step 3/3. Its function is as follows. Catalyzes the oxidative decarboxylation of 6-phosphogluconate to ribulose 5-phosphate and CO(2), with concomitant reduction of NADP to NADPH. The polypeptide is 6-phosphogluconate dehydrogenase, decarboxylating 1 (pgdC) (Spinacia oleracea (Spinach)).